The chain runs to 109 residues: Small ribosomal subunit protein uS17 (109 aa).

It belongs to the universal ribosomal protein uS17 family. Part of the 30S ribosomal subunit.

In terms of biological role, one of the primary rRNA binding proteins, it binds specifically to the 5'-end of 16S ribosomal RNA. The sequence is that of Small ribosomal subunit protein uS17 from Methanosarcina mazei (strain ATCC BAA-159 / DSM 3647 / Goe1 / Go1 / JCM 11833 / OCM 88) (Methanosarcina frisia).